Consider the following 62-residue polypeptide: GLAYDISDDQQDITRMGINPIMMSAGELESGNAGEPAKMCCLFINDLDAGAGRIGVCTGIFR.

The protein belongs to the RuBisCO activase family.

It is found in the plastid. It localises to the chloroplast stroma. In terms of biological role, activation of RuBisCO (ribulose-1,5-bisphosphate carboxylase/oxygenase; EC 4.1.1.39) involves the ATP-dependent carboxylation of the epsilon-amino group of lysine leading to a carbamate structure. The protein is Ribulose bisphosphate carboxylase/oxygenase activase, chloroplastic of Vitis sp. (Grape).